A 190-amino-acid polypeptide reads, in one-letter code: MKVFAYIALATVVAGANIRNHFGDNCKGGYLDYPNIAQRICASALHDKIKGAVTVAFSQLPQHSYMNGYQNTRDGGICGSRQKQQNVGNTDHKCLPKLAGGAEYAGSSWTAPGFKAASEKDMECTSEMAPHALVLNDGHKYALGGMEKDMINTLYSMAIEGKGFQELPTEFGAFEIEKEGAQQRAQEIKA.

The signal sequence occupies residues 1–15 (MKVFAYIALATVVAG).

It is found in the secreted. This is an uncharacterized protein from Arthroderma benhamiae (strain ATCC MYA-4681 / CBS 112371) (Trichophyton mentagrophytes).